Here is an 85-residue protein sequence, read N- to C-terminus: Putative membrane protein insertion efficiency factor (85 aa).

It belongs to the UPF0161 family.

The protein localises to the cell inner membrane. Functionally, could be involved in insertion of integral membrane proteins into the membrane. The sequence is that of Putative membrane protein insertion efficiency factor from Shewanella woodyi (strain ATCC 51908 / MS32).